A 1250-amino-acid polypeptide reads, in one-letter code: Myosin-1 (1250 aa).

The disordered stretch occupies residues 1-43 (MGHSRRPAGGEKKSRGFGRSKAAADVGDGRQTGGKPQVKKATF). One can recognise a Myosin motor domain in the interval 51–730 (IGVSDLTLLS…TLFALEAMRD (680 aa)). 144 to 151 (GESGAGKT) provides a ligand contact to ATP. S372 is modified (phosphoserine). An actin-binding region spans residues 419–501 (SIGILDIYGF…PGVFAALNDA (83 aa)). IQ domains lie at 734 to 754 (HNMA…RTEC) and 755 to 780 (AIRI…QGHQ). The TH1 domain maps to 788–978 (RRRMSLLGSR…TIHTGPGEPA (191 aa)). Disordered stretches follow at residues 962–1079 (DDSY…PKKP) and 1126–1250 (WTPE…DDDW). Positions 1021–1035 (AAQPLPRATPQPAAP) are enriched in pro residues. Residues 1036–1051 (QPAARAVPQPVAAVAA) show a composition bias toward low complexity. 2 stretches are compositionally biased toward pro residues: residues 1064-1077 (APPP…PAPK) and 1139-1151 (TPKP…PPAA). The SH3 domain maps to 1076–1137 (PKKPTAKVLY…PEAYLEEQVA (62 aa)). The span at 1152–1170 (PRSTPAPATNGAAAAAKAK) shows a compositional bias: low complexity. Polar residues predominate over residues 1201–1222 (VSMNSHDSSGGSGRGTPNSMSN). The segment covering 1223-1232 (ASLAGGLAEA) has biased composition (low complexity).

This sequence belongs to the TRAFAC class myosin-kinesin ATPase superfamily. Myosin family. In terms of processing, phosphorylation of the TEDS site (Ser-372) is required for the polarization of the actin cytoskeleton. Phosphorylation probably activates the myosin-I ATPase activity.

The protein resides in the cytoplasm. It is found in the cytoskeleton. Its subcellular location is the actin patch. Type-I myosin implicated in the organization of the actin cytoskeleton. Required for proper actin cytoskeleton polarization. At the cell cortex, assembles in patch-like structures together with proteins from the actin-polymerizing machinery and promotes actin assembly. Functions as actin nucleation-promoting factor (NPF) for the Arp2/3 complex. Plays an important role in polarized growth, spore germination, hyphal morphogenesis, and septal wall formation. In Neosartorya fischeri (strain ATCC 1020 / DSM 3700 / CBS 544.65 / FGSC A1164 / JCM 1740 / NRRL 181 / WB 181) (Aspergillus fischerianus), this protein is Myosin-1 (myoA).